A 338-amino-acid polypeptide reads, in one-letter code: Tetraacyldisaccharide 4'-kinase (338 aa).

Position 65-72 (65-72 (TVGGTGKT)) interacts with ATP.

Belongs to the LpxK family.

It carries out the reaction a lipid A disaccharide + ATP = a lipid IVA + ADP + H(+). The protein operates within glycolipid biosynthesis; lipid IV(A) biosynthesis; lipid IV(A) from (3R)-3-hydroxytetradecanoyl-[acyl-carrier-protein] and UDP-N-acetyl-alpha-D-glucosamine: step 6/6. Functionally, transfers the gamma-phosphate of ATP to the 4'-position of a tetraacyldisaccharide 1-phosphate intermediate (termed DS-1-P) to form tetraacyldisaccharide 1,4'-bis-phosphate (lipid IVA). The protein is Tetraacyldisaccharide 4'-kinase of Paraburkholderia xenovorans (strain LB400).